The sequence spans 131 residues: Small ribosomal subunit protein eS17 (131 aa).

The protein belongs to the eukaryotic ribosomal protein eS17 family.

This Drosophila melanogaster (Fruit fly) protein is Small ribosomal subunit protein eS17 (RpS17).